The primary structure comprises 540 residues: Phenylalanine--tRNA ligase beta subunit (540 aa).

Residues L266–T342 form the B5 domain. D320, D326, E329, and D330 together coordinate Mg(2+).

It belongs to the phenylalanyl-tRNA synthetase beta subunit family. Type 2 subfamily. As to quaternary structure, tetramer of two alpha and two beta subunits. Mg(2+) is required as a cofactor.

It localises to the cytoplasm. It carries out the reaction tRNA(Phe) + L-phenylalanine + ATP = L-phenylalanyl-tRNA(Phe) + AMP + diphosphate + H(+). In Methanocorpusculum labreanum (strain ATCC 43576 / DSM 4855 / Z), this protein is Phenylalanine--tRNA ligase beta subunit.